The following is a 113-amino-acid chain: Hydrogenase maturation factor HypA (113 aa).

Position 2 (His-2) interacts with Ni(2+). Zn(2+)-binding residues include Cys-73, Cys-76, Cys-89, and Cys-92.

Belongs to the HypA/HybF family.

Its function is as follows. Involved in the maturation of [NiFe] hydrogenases. Required for nickel insertion into the metal center of the hydrogenase. This Azotobacter chroococcum mcd 1 protein is Hydrogenase maturation factor HypA.